The sequence spans 145 residues: uncharacterized protein (145 aa).

Residues 16–36 (VLAYLLQLSASLVLPVAIWLI) form a helical membrane-spanning segment.

It localises to the mitochondrion membrane. This is an uncharacterized protein from Arabidopsis thaliana (Mouse-ear cress).